Reading from the N-terminus, the 75-residue chain is Calhepatin (75 aa).

S1 is subject to N-acetylserine. 2 consecutive EF-hand domains span residues 2–37 (ADEQ…VHPK) and 38–73 (VSRN…LADL). 10 residues coordinate Ca(2+): D15, D17, S19, T21, E26, D51, N53, D55, Q57, and E62.

Monomer and homodimer. Liver, and to a much lower level intestine.

Its function is as follows. Binds both calcium and copper, but not zinc. May be involved in calcium signal transduction. The sequence is that of Calhepatin from Lepidosiren paradoxus (South American lungfish).